The sequence spans 179 residues: Apoptosis regulator Bcl-2 homolog (179 aa).

Positions 76-95 (ELFKDLINWGRICGFIVFSA) match the BH1 motif. A BH2 motif is present at residues 126-141 (PWMISHGGQEEFLAFS).

The protein belongs to the Bcl-2 family. In terms of assembly, interacts with host BECN1 (via BH3 homology domain); this interaction allows the virus to inhibit BECN1, and thus autophagy. Interacts with host BID. Interacts with host BAX.

The protein localises to the host mitochondrion. Its subcellular location is the host endoplasmic reticulum. Functionally, suppresses apoptosis in host cell to promote the viral replication. Has the ability to potentially bind to all the members of the proapoptotic Bcl-2 family. Inhibits autophagy by interacting with host Beclin 1 (BECN1). This African swine fever virus (isolate Pig/Kenya/KEN-50/1950) (ASFV) protein is Apoptosis regulator Bcl-2 homolog.